The following is a 116-amino-acid chain: Large ribosomal subunit protein uL18 (116 aa).

The protein belongs to the universal ribosomal protein uL18 family. In terms of assembly, part of the 50S ribosomal subunit; part of the 5S rRNA/L5/L18/L25 subcomplex. Contacts the 5S and 23S rRNAs.

In terms of biological role, this is one of the proteins that bind and probably mediate the attachment of the 5S RNA into the large ribosomal subunit, where it forms part of the central protuberance. This chain is Large ribosomal subunit protein uL18, found in Marinomonas sp. (strain MWYL1).